The primary structure comprises 155 residues: UPF0266 membrane protein lin0773 (155 aa).

A run of 3 helical transmembrane segments spans residues 8-28, 46-66, and 70-90; these read IFLFIANILTLLYILYNDAVI, RWDGYIFVGIIVLLFVSNTFF, and PFSTSVLLAVMGVLFIYICFF.

The protein belongs to the UPF0266 family.

The protein resides in the cell membrane. This Listeria innocua serovar 6a (strain ATCC BAA-680 / CLIP 11262) protein is UPF0266 membrane protein lin0773.